The following is a 143-amino-acid chain: Pre-mRNA-splicing factor U5-Cwc21 (143 aa).

Residues 27 to 70 (EHHRSLRAIKLKVLLYREEREAAGVPPDVISRECATLHGSLLRN) enclose the CWF21 domain.

This sequence belongs to the CWC21 family. Associates with the NTC complex (or PRP19-associated complex). The NTC complex associates with the spliceosome after the release of the U1 and U4 snRNAs and forms the CWC spliceosome subcomplex reminiscent of a late-stage spliceosome. Associates specifically with U5-containing snRNPs.

The protein localises to the cytoplasm. It is found in the nucleus. Essential protein involved in pre-mRNA cis- and trans-splicing. May function at or prior to the first catalytic step of splicing at the catalytic center of the spliceosome. May do so by stabilizing the catalytic center or the position of the RNA substrate. This chain is Pre-mRNA-splicing factor U5-Cwc21, found in Trypanosoma brucei brucei (strain 927/4 GUTat10.1).